The primary structure comprises 219 residues: Cytidylate kinase (219 aa).

ATP is bound at residue 15 to 23 (GPAASGKGT).

The protein belongs to the cytidylate kinase family. Type 1 subfamily.

It is found in the cytoplasm. It catalyses the reaction CMP + ATP = CDP + ADP. It carries out the reaction dCMP + ATP = dCDP + ADP. This is Cytidylate kinase from Brucella suis biovar 1 (strain 1330).